Here is a 379-residue protein sequence, read N- to C-terminus: Polycomb group protein FIE2 (379 aa).

6 WD repeats span residues 85–128, 131–171, 177–217, 243–280, 292–333, and 340–378; these read DKDE…LAKS, GHGD…CILI, GHRN…LYVD, VHSN…QSPG, VPEC…PVLI, and QCKS…PSSR.

This sequence belongs to the WD repeat ESC family. In terms of tissue distribution, widely expressed. Expressed in the embryo sac before pollination. After pollination, its expression persists, predominantly in the embryo and at lower levels in the endosperm.

It localises to the nucleus. Functionally, polycomb group (PcG) protein. PcG proteins act by forming multiprotein complexes, which are required to maintain the transcriptionally repressive state of homeotic genes throughout development. PcG proteins are not required to initiate repression, but to maintain it during later stages of development. They probably act via the methylation of histones, rendering chromatin heritably changed in its expressibility. This is Polycomb group protein FIE2 (FIE2) from Zea mays (Maize).